The primary structure comprises 209 residues: Probable peptide export ATP-binding protein YydI (209 aa).

Residues 1–207 form the ABC transporter domain; it reads MNIANYTLKV…SVDKLIEVYI (207 aa). 33–40 is a binding site for ATP; that stretch reads GKNGVGKS.

This sequence belongs to the ABC transporter superfamily. The complex is composed of two ATP-binding proteins (YydI), two transmembrane proteins (YydJ).

In terms of biological role, suggested to be part of an ABC transporter complex YydIJ involved in export of the modified peptide YydF. Responsible for energy coupling to the transport system. The sequence is that of Probable peptide export ATP-binding protein YydI (yydI) from Bacillus subtilis (strain 168).